A 220-amino-acid polypeptide reads, in one-letter code: Guanylate kinase (220 aa).

One can recognise a Guanylate kinase-like domain in the interval 3–180; the sequence is GRLFVMTGAS…AVADFLAILT (178 aa). 10-17 is an ATP binding site; sequence GASGVGKG.

Belongs to the guanylate kinase family.

Its subcellular location is the cytoplasm. The catalysed reaction is GMP + ATP = GDP + ADP. In terms of biological role, essential for recycling GMP and indirectly, cGMP. This is Guanylate kinase from Thermus thermophilus (strain ATCC BAA-163 / DSM 7039 / HB27).